Consider the following 538-residue polypeptide: Cytochrome c-552 (538 aa).

The first 55 residues, Met-1 to Ala-55, serve as a signal peptide directing secretion. His-133 lines the heme c pocket. The heme site is built by Cys-161, Cys-164, and Lys-165. Residues Cys-199, Cys-202, His-203, Cys-264, Cys-267, and His-268 each coordinate heme c. Glu-270, Tyr-271, Lys-316, and Gln-318 together coordinate Ca(2+). Substrate is bound at residue Tyr-271. A substrate-binding site is contributed by His-319. Heme c-binding residues include His-330, Cys-337, Cys-340, His-341, His-356, Cys-369, Cys-372, His-373, and His-448.

Belongs to the cytochrome c-552 family. The cofactor is Ca(2+). Heme c is required as a cofactor.

It is found in the periplasm. It catalyses the reaction 6 Fe(III)-[cytochrome c] + NH4(+) + 2 H2O = 6 Fe(II)-[cytochrome c] + nitrite + 8 H(+). Its pathway is nitrogen metabolism; nitrate reduction (assimilation). Its function is as follows. Catalyzes the reduction of nitrite to ammonia, consuming six electrons in the process. The chain is Cytochrome c-552 from Haemophilus influenzae (strain 86-028NP).